Reading from the N-terminus, the 372-residue chain is tRNA-specific 2-thiouridylase MnmA (372 aa).

ATP-binding positions include 16–23 (GMSGGVDS) and Met42. The tract at residues 102–104 (NPD) is interaction with target base in tRNA. Cys107 acts as the Nucleophile in catalysis. A disulfide bridge connects residues Cys107 and Cys205. ATP is bound at residue Gly132. The interaction with tRNA stretch occupies residues 155-157 (KDQ). Catalysis depends on Cys205, which acts as the Cysteine persulfide intermediate. The interaction with tRNA stretch occupies residues 317 to 318 (RY).

It belongs to the MnmA/TRMU family.

The protein localises to the cytoplasm. It carries out the reaction S-sulfanyl-L-cysteinyl-[protein] + uridine(34) in tRNA + AH2 + ATP = 2-thiouridine(34) in tRNA + L-cysteinyl-[protein] + A + AMP + diphosphate + H(+). Functionally, catalyzes the 2-thiolation of uridine at the wobble position (U34) of tRNA, leading to the formation of s(2)U34. The protein is tRNA-specific 2-thiouridylase MnmA of Shewanella sp. (strain MR-4).